The chain runs to 510 residues: D-alanine--D-alanyl carrier protein ligase (510 aa).

157-158 (TS) serves as a coordination point for ATP. Asp202 contacts D-alanine. Residue 297–302 (NTYGPT) coordinates ATP. A D-alanine-binding site is contributed by Val306. Asp389 and Lys498 together coordinate ATP. Position 498 (Lys498) interacts with D-alanine.

This sequence belongs to the ATP-dependent AMP-binding enzyme family. DltA subfamily.

Its subcellular location is the cytoplasm. The catalysed reaction is holo-[D-alanyl-carrier protein] + D-alanine + ATP = D-alanyl-[D-alanyl-carrier protein] + AMP + diphosphate. The protein operates within cell wall biogenesis; lipoteichoic acid biosynthesis. Functionally, catalyzes the first step in the D-alanylation of lipoteichoic acid (LTA), the activation of D-alanine and its transfer onto the D-alanyl carrier protein (Dcp) DltC. In an ATP-dependent two-step reaction, forms a high energy D-alanyl-AMP intermediate, followed by transfer of the D-alanyl residue as a thiol ester to the phosphopantheinyl prosthetic group of the Dcp. D-alanylation of LTA plays an important role in modulating the properties of the cell wall in Gram-positive bacteria, influencing the net charge of the cell wall. The sequence is that of D-alanine--D-alanyl carrier protein ligase from Listeria monocytogenes serotype 4b (strain CLIP80459).